A 410-amino-acid chain; its full sequence is Cytochrome P450(MEG) (410 aa).

Residue Cys355 coordinates heme.

The protein belongs to the cytochrome P450 family. The cofactor is heme.

It localises to the cytoplasm. It catalyses the reaction reduced 2[4Fe-4S]-[ferredoxin] + progesterone + O2 + 2 H(+) = 15beta-hydroxyprogesterone + oxidized 2[4Fe-4S]-[ferredoxin] + H2O. Its function is as follows. Has the capacity to hydroxylate certain steroids in the 15-beta position. Also hydroxylates progesterone in the 11-alpha and 9-beta position. This Priestia megaterium (Bacillus megaterium) protein is Cytochrome P450(MEG) (cyp106A2).